The sequence spans 483 residues: Beta-glucosidase 4 (483 aa).

A beta-D-glucoside-binding positions include Q29, H131, 176–177 (NE), Y310, and E380. E177 (proton donor) is an active-site residue. The Nucleophile role is filled by E380. Residue N398 is glycosylated (N-linked (GlcNAc...) asparagine). Residues W429, 436–437 (EW), and F445 contribute to the a beta-D-glucoside site.

It belongs to the glycosyl hydrolase 1 family.

It catalyses the reaction Hydrolysis of terminal, non-reducing beta-D-glucosyl residues with release of beta-D-glucose.. This is Beta-glucosidase 4 (BGLU4) from Oryza sativa subsp. japonica (Rice).